Here is a 260-residue protein sequence, read N- to C-terminus: tRNA pseudouridine synthase C (260 aa).

D54 is an active-site residue.

Belongs to the pseudouridine synthase RluA family.

The catalysed reaction is uridine(65) in tRNA = pseudouridine(65) in tRNA. Functionally, responsible for synthesis of pseudouridine from uracil-65 in transfer RNAs. This is tRNA pseudouridine synthase C (truC) from Escherichia coli O157:H7.